The chain runs to 65 residues: Large ribosomal subunit protein bL35 (65 aa).

Over residues 1 to 16 (MPKMKTKKSAAKRFKV) the composition is skewed to basic residues. A disordered region spans residues 1 to 25 (MPKMKTKKSAAKRFKVRGSGSIKRG).

It belongs to the bacterial ribosomal protein bL35 family.

The polypeptide is Large ribosomal subunit protein bL35 (Bordetella parapertussis (strain 12822 / ATCC BAA-587 / NCTC 13253)).